The chain runs to 679 residues: Methionine--tRNA ligase (679 aa).

A 'HIGH' region motif is present at residues 14–24; it reads PYANGSIHLGH. Cys145, Cys148, Cys158, and Cys161 together coordinate Zn(2+). The 'KMSKS' region signature appears at 331-335; it reads KMSKS. Residue Lys334 participates in ATP binding. The 103-residue stretch at 577–679 folds into the tRNA-binding domain; that stretch reads TFAAVDLRIA…NGAKPGQRVM (103 aa).

Belongs to the class-I aminoacyl-tRNA synthetase family. MetG type 1 subfamily. In terms of assembly, homodimer. Zn(2+) is required as a cofactor.

It localises to the cytoplasm. It carries out the reaction tRNA(Met) + L-methionine + ATP = L-methionyl-tRNA(Met) + AMP + diphosphate. Functionally, is required not only for elongation of protein synthesis but also for the initiation of all mRNA translation through initiator tRNA(fMet) aminoacylation. This Stutzerimonas stutzeri (strain A1501) (Pseudomonas stutzeri) protein is Methionine--tRNA ligase.